Reading from the N-terminus, the 187-residue chain is Orotate phosphoribosyltransferase (187 aa).

Residues arginine 98, lysine 99, lysine 102, histidine 104, and 128 to 136 (EDVTTTGGS) each bind 5-phospho-alpha-D-ribose 1-diphosphate. 2 residues coordinate orotate: threonine 132 and arginine 160.

The protein belongs to the purine/pyrimidine phosphoribosyltransferase family. PyrE subfamily. As to quaternary structure, homodimer. It depends on Mg(2+) as a cofactor.

The enzyme catalyses orotidine 5'-phosphate + diphosphate = orotate + 5-phospho-alpha-D-ribose 1-diphosphate. The protein operates within pyrimidine metabolism; UMP biosynthesis via de novo pathway; UMP from orotate: step 1/2. Its function is as follows. Catalyzes the transfer of a ribosyl phosphate group from 5-phosphoribose 1-diphosphate to orotate, leading to the formation of orotidine monophosphate (OMP). The sequence is that of Orotate phosphoribosyltransferase from Rhodopseudomonas palustris (strain BisB5).